A 243-amino-acid polypeptide reads, in one-letter code: Ribosomal RNA small subunit methyltransferase J (243 aa).

S-adenosyl-L-methionine contacts are provided by residues 112 to 113 (ER) and Asp164.

The protein belongs to the methyltransferase superfamily. RsmJ family.

The protein resides in the cytoplasm. It carries out the reaction guanosine(1516) in 16S rRNA + S-adenosyl-L-methionine = N(2)-methylguanosine(1516) in 16S rRNA + S-adenosyl-L-homocysteine + H(+). In terms of biological role, specifically methylates the guanosine in position 1516 of 16S rRNA. In Legionella pneumophila subsp. pneumophila (strain Philadelphia 1 / ATCC 33152 / DSM 7513), this protein is Ribosomal RNA small subunit methyltransferase J.